Here is a 665-residue protein sequence, read N- to C-terminus: Putative phospholipid:diacylglycerol acyltransferase 2 (665 aa).

A helical transmembrane segment spans residues 48–68 (LIGYLCTAWWLLLFLYHSVPV). The active-site Acyl-ester intermediate is Ser237. Residues Asp567 and His620 each act as charge relay system in the active site.

The protein belongs to the AB hydrolase superfamily. Lipase family.

It is found in the membrane. It catalyses the reaction a glycerophospholipid + a 1,2-diacyl-sn-glycerol = a monoacylglycerophospholipid + a triacyl-sn-glycerol. This Arabidopsis thaliana (Mouse-ear cress) protein is Putative phospholipid:diacylglycerol acyltransferase 2 (PDAT2).